A 517-amino-acid chain; its full sequence is MQNNIIIFDTTLRDGEQALKASLTVKEKLQIALALERLGVDVMEVGFPVSSAGDFESVQTIARHIKNSRVCALSRAVDKDIDIAADALKVAEAFRIHTFIATSALHVEAKLRRTFDDVVEMAIQAVKRARRYTDDVEFSCEDAGRTGVDNICRIVEAAIKAGATTVNIPDTVGFCLPTEYGNIIDQVMNRVPNIDKAVISVHCHNDLGMATANSLTAVQNGARQIECTINGIGERAGNTALEEVVMAIKTRQDIFKGLDTRINTQEIHRVSQMVSQLCNMPIQPNKAIVGSNAFAHSSGIHQDGMVKNKNTYEIMSPETIGLKKEKLNLTARSGRAAVKSHMDAMGYQQNDYDLDKLYAAFLKLADKKGQVFDYDLEALAFIDMQQGDEDRLSLDVITSQTISNLPASAFVQVELDGKKISQVSNGGNGPVDAVYNAILAITDMDITMLHYNLTAKGEGAEALGQVDIVVEHKGRRFHGVGLATDIVESSARALIHAINAIYRANKVADLKSHKISQ.

The Pyruvate carboxyltransferase domain maps to 5–268 (IIIFDTTLRD…DTRINTQEIH (264 aa)). 4 residues coordinate Mn(2+): D14, H202, H204, and N238. A regulatory domain region spans residues 393 to 517 (SLDVITSQTI…ADLKSHKISQ (125 aa)).

The protein belongs to the alpha-IPM synthase/homocitrate synthase family. LeuA type 1 subfamily. As to quaternary structure, homodimer. Mn(2+) serves as cofactor.

It is found in the cytoplasm. The catalysed reaction is 3-methyl-2-oxobutanoate + acetyl-CoA + H2O = (2S)-2-isopropylmalate + CoA + H(+). The protein operates within amino-acid biosynthesis; L-leucine biosynthesis; L-leucine from 3-methyl-2-oxobutanoate: step 1/4. In terms of biological role, catalyzes the condensation of the acetyl group of acetyl-CoA with 3-methyl-2-oxobutanoate (2-ketoisovalerate) to form 3-carboxy-3-hydroxy-4-methylpentanoate (2-isopropylmalate). The chain is 2-isopropylmalate synthase from Histophilus somni (strain 2336) (Haemophilus somnus).